The sequence spans 465 residues: MTHTTTIAAIATPVGRGGVGIIRLSGPKAYAIACALTGKESFTPRLASFCRFYDANNNVLDEGLVLYFKAPHSFTGEDVIELQGHGGMILQNQLLARVFELGAHQAQAGEFSYRAFDNDKLDLLQAEAIADAIDATSAAAASSAIRSLTGAFSNKINEVLEALIELRLYVEASIDFPDEEDVDFLSDGVIEGKLQRIQQQLTTILSTAQQGQLLRDGVHVVLAGRPNAGKSSLLNSLAGQERAIVTDVAGTTRDTLQETIVLNGLTIHLTDTAGLRDTTDAVERIGIERARTAINQADLLLLVYDLSQEVDPLKLASELFGEGIDGTPNFDPSKLLLIGNKRDLVEDKGESANKLADKADILGYEQVNVSCETSQGIPQLIASLCDKVGFHPPENSLIARTRHLDALRRTQQHVDEAHQQLVIYQAGELVAESLRQGQYSLGEITGEFSADDLLGRIFGSFCIGK.

The (6S)-5-formyl-5,6,7,8-tetrahydrofolate site is built by Arg23, Glu81, and Lys120. The region spanning 217 to 389 is the TrmE-type G domain; that stretch reads GVHVVLAGRP…LIASLCDKVG (173 aa). A K(+)-binding site is contributed by Asn227. GTP contacts are provided by residues 227–232, 246–252, and 271–274; these read NAGKSS, TDVAGTT, and DTAG. Ser231 is a binding site for Mg(2+). Residues Thr246, Val248, and Thr251 each contribute to the K(+) site. Thr252 is a binding site for Mg(2+). Lys465 contacts (6S)-5-formyl-5,6,7,8-tetrahydrofolate.

It belongs to the TRAFAC class TrmE-Era-EngA-EngB-Septin-like GTPase superfamily. TrmE GTPase family. In terms of assembly, homodimer. Heterotetramer of two MnmE and two MnmG subunits. The cofactor is K(+).

Its subcellular location is the cytoplasm. Its function is as follows. Exhibits a very high intrinsic GTPase hydrolysis rate. Involved in the addition of a carboxymethylaminomethyl (cmnm) group at the wobble position (U34) of certain tRNAs, forming tRNA-cmnm(5)s(2)U34. This chain is tRNA modification GTPase MnmE, found in Psychrobacter sp. (strain PRwf-1).